The sequence spans 208 residues: Holliday junction resolvase RecU (208 aa).

Positions 1–30 (MNYPNGKPFNRNKSQVGRTHKGQTSKIDYG) are disordered. Thr-87, Asp-89, Glu-102, and Gln-121 together coordinate Mg(2+).

Belongs to the RecU family. Mg(2+) serves as cofactor.

The protein localises to the cytoplasm. It catalyses the reaction Endonucleolytic cleavage at a junction such as a reciprocal single-stranded crossover between two homologous DNA duplexes (Holliday junction).. In terms of biological role, endonuclease that resolves Holliday junction intermediates in genetic recombination. Cleaves mobile four-strand junctions by introducing symmetrical nicks in paired strands. Promotes annealing of linear ssDNA with homologous dsDNA. Required for DNA repair, homologous recombination and chromosome segregation. This is Holliday junction resolvase RecU from Staphylococcus saprophyticus subsp. saprophyticus (strain ATCC 15305 / DSM 20229 / NCIMB 8711 / NCTC 7292 / S-41).